Here is a 426-residue protein sequence, read N- to C-terminus: mRNA cap guanine-N(7) methyltransferase (426 aa).

One can recognise an mRNA cap 0 methyltransferase domain in the interval 138–421 (SPIIKLRNFN…FYTTFAFRKV (284 aa)). 147–148 (NN) serves as a coordination point for mRNA. Residues Lys-151, Ala-169, Asp-191, Asp-220, Gln-246, and Tyr-251 each contribute to the S-adenosyl-L-methionine site.

This sequence belongs to the class I-like SAM-binding methyltransferase superfamily. mRNA cap 0 methyltransferase family.

The protein localises to the nucleus. The enzyme catalyses a 5'-end (5'-triphosphoguanosine)-ribonucleoside in mRNA + S-adenosyl-L-methionine = a 5'-end (N(7)-methyl 5'-triphosphoguanosine)-ribonucleoside in mRNA + S-adenosyl-L-homocysteine. Functionally, responsible for methylating the 5'-cap structure of mRNAs. The sequence is that of mRNA cap guanine-N(7) methyltransferase (ABD1) from Kluyveromyces lactis (strain ATCC 8585 / CBS 2359 / DSM 70799 / NBRC 1267 / NRRL Y-1140 / WM37) (Yeast).